The chain runs to 512 residues: Probable ubiquitin carboxyl-terminal hydrolase 3 (512 aa).

The segment at 64–109 (TSKTKESEKSPKSWSAIAKKHVQGDSPVKKSHSVPVPSDRSEKKSF) is disordered. In terms of domain architecture, USP spans 133-511 (RGFINTGNIC…VAYLLFYTRR (379 aa)). Cys-142 serves as the catalytic Nucleophile. Residue His-453 is the Proton acceptor of the active site.

It belongs to the peptidase C19 family.

It carries out the reaction Thiol-dependent hydrolysis of ester, thioester, amide, peptide and isopeptide bonds formed by the C-terminal Gly of ubiquitin (a 76-residue protein attached to proteins as an intracellular targeting signal).. This is Probable ubiquitin carboxyl-terminal hydrolase 3 (ubp3) from Schizosaccharomyces pombe (strain 972 / ATCC 24843) (Fission yeast).